The following is a 602-amino-acid chain: FAD-binding monooxygenase hmp7 (602 aa).

Residues 108–111 (TWYW), 120–121 (DV), and tyrosine 126 each bind FAD. 118-120 (QCD) contacts NADP(+). NADP(+)-binding positions include 252–258 (TGATAVQ) and 275–276 (RT).

The protein belongs to the FAD-binding monooxygenase family. FAD is required as a cofactor.

It functions in the pathway secondary metabolite biosynthesis. FAD-binding monooxygenase; part of the gene cluster that mediates the biosynthesis of hypothemycin, a resorcylic acid lactone (RAL) that irreversibly inhibits a subset of protein kinases with a conserved cysteine in the ATP binding site such as human ERK2. The first step is performed by both PKSs hmp3 and hmp8 and leads to the production of 7',8'-dehydrozearalenol (DHZ). The highly reducing PKS hpm8 synthesizes the reduced hexaketide (7S,11S,2E,8E)-7,11-dihydroxy-dodeca-2,8-dienoate, which is transferred downstream to the non-reducing PKS hpm3. Hpm3 then extends the reduced hexaketide to a nonaketide, after which regioselective cyclization and macrolactonization affords DHZ. The next step is the conversion of DHZ into aigialomycin C and is performed by the O-methyltransferase hmp5, the FAD-binding monooxygenase hmp7, and the cytochrome P450 monooxygenase hmp1. The wide substrate tolerance of the hmp5 and hmp7 implies that the reactions from DHZ to aigialomycin C can occur in any order. The steps from aigialomycin C to hypothemycin are less well established. The FAD-linked oxidoreductase hmp9 presumably catalyzes oxidation of the C-6' hydroxyl to a ketone. The timing of this oxidation is important, since the resulting enone functional group is a Michael acceptor that can react spontaneously with glutathione, an abundant metabolite in fungal cells. The glutathione S-transferase hmp2 catalyzes cis-trans isomerization of the 7',8' double bond with equilibrium favoring the trans isomer. The hpm6-encoded transporter might preferentially pump hypothemycin out of the cell relative to the trans isomer aigialomycin A. The cis-to-trans isomerization may be coupled with C-4' hydroxylation, since all known hypothemycin analogs containing the enone functional group also have hydroxyl groups at both C-4' and C-5'. The polypeptide is FAD-binding monooxygenase hmp7 (Hypomyces subiculosus (Nectria subiculosa)).